Here is a 72-residue protein sequence, read N- to C-terminus: Hypotensin (72 aa).

An N-terminal signal peptide occupies residues 1–24 (MKMMIAVFVSILLLMFSLSSTAMG). 2 consecutive propeptides follow at residues 25 to 35 (METEQQNMEER) and 61 to 72 (RFDPATFGENED).

This sequence belongs to the non-disulfide-bridged peptide (NDBP) superfamily. As to expression, expressed by the venom gland.

It localises to the secreted. Potentiates the hypotensive action of bradykinin (BK) in normotensive rats, and induces a vasorelaxant effect in mesenteric artery rings that is induced by endothelium-dependent release of nitric oxide (NO). Does not inhibit angiotensin converting enzyme (ACE). Shows neither hemolytic activity nor cytotoxicity to normal and cancer cells. Shows moderate antimicrobial activity against the fungi Candida albicans and the filamentous fungus Trichophyton rubrum, as well as against the bacteria C.albicans (MIC=128 ug/mL), C.tropicalis (MIC=128 ug/mL) and Aspergillus flavus (MIC=128 ug/mL). Has no antimicrobial activity against S.aureus, S.epidermidis and P.aeruginosa. This Tityus stigmurus (Brazilian scorpion) protein is Hypotensin.